A 436-amino-acid polypeptide reads, in one-letter code: MQTIDLRGVQPTRTAFERLVPRPVVDVQAAMTVAADLIADVRKRGAAALREQAERFDGGVPASVRVPVAEIVAAVDALPGGVREALEEAIARVREATAAQVPPAAVTRIGPGAVIEQRWQPVERAGLYVPGGKAVYPSSVVMNAVPAQVAGVASIALASPPQREFGGAVHPTILGAAGLLGIDEVYAMGGAGAIGALAWGVGELGLEPVQVITGPGNIYVAAAKRVVRGQTGIDSEAGTTEILVIADDTADPRYVAADLISQAEHDEAAASLLVTDSPAFVGRVAAELETLAASTRYAERVRAALGGQQSAVVLVDDLDAAAAFSNAYGPEHLELQTADAEAVLARIQNAGAIFVGPHAPVSLGDYLAGSNHVLPTGGQARFSPGLGAYSFLRPQQVIRYDREALRAVAGRIVALSGAEDLSAHGEAVTLRFEERA.

Residues T240, Q262, and H265 each coordinate substrate. Zn(2+)-binding residues include Q262 and H265. Active-site proton acceptor residues include E331 and H332. Substrate is bound by residues H332, D365, E419, and H424. D365 provides a ligand contact to Zn(2+). H424 contributes to the Zn(2+) binding site.

It belongs to the histidinol dehydrogenase family. Zn(2+) is required as a cofactor.

The enzyme catalyses L-histidinol + 2 NAD(+) + H2O = L-histidine + 2 NADH + 3 H(+). It functions in the pathway amino-acid biosynthesis; L-histidine biosynthesis; L-histidine from 5-phospho-alpha-D-ribose 1-diphosphate: step 9/9. Catalyzes the sequential NAD-dependent oxidations of L-histidinol to L-histidinaldehyde and then to L-histidine. The polypeptide is Histidinol dehydrogenase (Leifsonia xyli subsp. xyli (strain CTCB07)).